Reading from the N-terminus, the 376-residue chain is Aspartate-semialdehyde dehydrogenase (376 aa).

NADP(+)-binding positions include 11-14 (RGMV), 38-39 (TS), and Gln74. Arg103 lines the phosphate pocket. Cys136 serves as the catalytic Acyl-thioester intermediate. Gln163 is a substrate binding site. NADP(+) is bound by residues 166-167 (SG) and Pro194. Position 242 (Glu242) interacts with substrate. Lys245 provides a ligand contact to phosphate. A substrate-binding site is contributed by Arg273. His280 (proton acceptor) is an active-site residue. Gln356 is an NADP(+) binding site.

Belongs to the aspartate-semialdehyde dehydrogenase family. As to quaternary structure, homodimer.

It catalyses the reaction L-aspartate 4-semialdehyde + phosphate + NADP(+) = 4-phospho-L-aspartate + NADPH + H(+). It participates in amino-acid biosynthesis; L-lysine biosynthesis via DAP pathway; (S)-tetrahydrodipicolinate from L-aspartate: step 2/4. It functions in the pathway amino-acid biosynthesis; L-methionine biosynthesis via de novo pathway; L-homoserine from L-aspartate: step 2/3. The protein operates within amino-acid biosynthesis; L-threonine biosynthesis; L-threonine from L-aspartate: step 2/5. In terms of biological role, catalyzes the NADPH-dependent formation of L-aspartate-semialdehyde (L-ASA) by the reductive dephosphorylation of L-aspartyl-4-phosphate. The sequence is that of Aspartate-semialdehyde dehydrogenase from Bordetella pertussis (strain Tohama I / ATCC BAA-589 / NCTC 13251).